The chain runs to 164 residues: Ubiquitin-fold modifier-conjugating enzyme 1 (164 aa).

Catalysis depends on Cys-116, which acts as the Glycyl thioester intermediate.

It belongs to the ubiquitin-conjugating enzyme family. UFC1 subfamily.

Functionally, E2-like enzyme which forms an intermediate with UFM1 via a thioester linkage. This is Ubiquitin-fold modifier-conjugating enzyme 1 from Drosophila erecta (Fruit fly).